A 494-amino-acid chain; its full sequence is Lysine--tRNA ligase (494 aa).

Residues Glu-407 and Glu-414 each contribute to the Mg(2+) site.

Belongs to the class-II aminoacyl-tRNA synthetase family. Homodimer. Mg(2+) serves as cofactor.

It localises to the cytoplasm. It carries out the reaction tRNA(Lys) + L-lysine + ATP = L-lysyl-tRNA(Lys) + AMP + diphosphate. The chain is Lysine--tRNA ligase from Lactococcus lactis subsp. cremoris (strain SK11).